We begin with the raw amino-acid sequence, 407 residues long: Na(+)-translocating NADH-quinone reductase subunit F (407 aa).

Residues 6–26 (IFLAIGMFTAIVLGLVAIILV) form a helical membrane-spanning segment. The 2Fe-2S ferredoxin-type domain occupies 35–127 (GDVTIQINGE…DMQIRVPEEV (93 aa)). [2Fe-2S] cluster-binding residues include Cys-70, Cys-76, Cys-79, and Cys-111. Residues 130 to 269 (VKKWECTVES…YGPFGEFFAK (140 aa)) enclose the FAD-binding FR-type domain.

It belongs to the NqrF family. Composed of six subunits; NqrA, NqrB, NqrC, NqrD, NqrE and NqrF. The cofactor is [2Fe-2S] cluster. FAD serves as cofactor.

It localises to the cell inner membrane. It catalyses the reaction a ubiquinone + n Na(+)(in) + NADH + H(+) = a ubiquinol + n Na(+)(out) + NAD(+). In terms of biological role, NQR complex catalyzes the reduction of ubiquinone-1 to ubiquinol by two successive reactions, coupled with the transport of Na(+) ions from the cytoplasm to the periplasm. The first step is catalyzed by NqrF, which accepts electrons from NADH and reduces ubiquinone-1 to ubisemiquinone by a one-electron transfer pathway. The polypeptide is Na(+)-translocating NADH-quinone reductase subunit F (Pseudomonas aeruginosa (strain UCBPP-PA14)).